Consider the following 259-residue polypeptide: Phosphoribosylaminoimidazole-succinocarboxamide synthase (259 aa).

This sequence belongs to the SAICAR synthetase family.

It carries out the reaction 5-amino-1-(5-phospho-D-ribosyl)imidazole-4-carboxylate + L-aspartate + ATP = (2S)-2-[5-amino-1-(5-phospho-beta-D-ribosyl)imidazole-4-carboxamido]succinate + ADP + phosphate + 2 H(+). The protein operates within purine metabolism; IMP biosynthesis via de novo pathway; 5-amino-1-(5-phospho-D-ribosyl)imidazole-4-carboxamide from 5-amino-1-(5-phospho-D-ribosyl)imidazole-4-carboxylate: step 1/2. The chain is Phosphoribosylaminoimidazole-succinocarboxamide synthase from Hyphomonas neptunium (strain ATCC 15444).